A 310-amino-acid chain; its full sequence is Ribosomal RNA small subunit methyltransferase H (310 aa).

S-adenosyl-L-methionine-binding positions include 32–34 (GGH), Asp52, Phe79, Asp100, and Gln107.

It belongs to the methyltransferase superfamily. RsmH family.

Its subcellular location is the cytoplasm. The enzyme catalyses cytidine(1402) in 16S rRNA + S-adenosyl-L-methionine = N(4)-methylcytidine(1402) in 16S rRNA + S-adenosyl-L-homocysteine + H(+). Its function is as follows. Specifically methylates the N4 position of cytidine in position 1402 (C1402) of 16S rRNA. This Bacillus cytotoxicus (strain DSM 22905 / CIP 110041 / 391-98 / NVH 391-98) protein is Ribosomal RNA small subunit methyltransferase H.